The chain runs to 133 residues: Ribonuclease VapC28 (133 aa).

One can recognise a PINc domain in the interval 1–124 (MIVDTSAIIA…LWKGNDFGHT (124 aa)). Residues Asp-4 and Asp-100 each contribute to the Mg(2+) site.

It belongs to the PINc/VapC protein family. Mg(2+) serves as cofactor.

Its function is as follows. Toxic component of a type II toxin-antitoxin (TA) system. An RNase. Upon expression in M.smegmatis inhibits colony formation. Its toxic effect is neutralized by coexpression with cognate antitoxin VapB28. This chain is Ribonuclease VapC28, found in Mycobacterium tuberculosis (strain ATCC 25618 / H37Rv).